Consider the following 421-residue polypeptide: Serine hydroxymethyltransferase (421 aa).

(6S)-5,6,7,8-tetrahydrofolate-binding positions include Leu120 and 124–126 (GHL). Residue Lys229 is modified to N6-(pyridoxal phosphate)lysine. 354 to 356 (SPF) lines the (6S)-5,6,7,8-tetrahydrofolate pocket.

It belongs to the SHMT family. As to quaternary structure, homodimer. Pyridoxal 5'-phosphate serves as cofactor.

The protein localises to the cytoplasm. It catalyses the reaction (6R)-5,10-methylene-5,6,7,8-tetrahydrofolate + glycine + H2O = (6S)-5,6,7,8-tetrahydrofolate + L-serine. The protein operates within one-carbon metabolism; tetrahydrofolate interconversion. Its pathway is amino-acid biosynthesis; glycine biosynthesis; glycine from L-serine: step 1/1. Functionally, catalyzes the reversible interconversion of serine and glycine with tetrahydrofolate (THF) serving as the one-carbon carrier. This reaction serves as the major source of one-carbon groups required for the biosynthesis of purines, thymidylate, methionine, and other important biomolecules. Also exhibits THF-independent aldolase activity toward beta-hydroxyamino acids, producing glycine and aldehydes, via a retro-aldol mechanism. The sequence is that of Serine hydroxymethyltransferase from Opitutus terrae (strain DSM 11246 / JCM 15787 / PB90-1).